The sequence spans 275 residues: MEAAAGERAEPGNLAGVRHIILVLSGKGGVGKSTISTELALALRHQGKKVGILDVDLCGPSIPHMLRAQGKAVHQCDNGWVPVFVDQEQSISLMSVGFLLENPDEAVVWRGPKKHALIKQFVSDVAWGQLDYLVVDTPPGTSDEHMATMEALRPYRPLGALVVTTPQAVSIGDVRRELTFCKKTGLQVIGVIENMSGFTCPHCAECTNVFSSGSGEELARLAGVPFLGSVPLDSQLTRSLEEGRDFIQEFPKSTAYSALTSIAQRVVHRMSALCS.

N-acetylmethionine is present on methionine 1. Residue 26-33 (GKGGVGKS) coordinates ATP. Cysteine 200 and cysteine 203 together coordinate [4Fe-4S] cluster.

Belongs to the Mrp/NBP35 ATP-binding proteins family. NUBP2/CFD1 subfamily. Heterotetramer of 2 NUBP1 and 2 NUBP2 chains. Interacts with KIFC1. Interacts with NUBP1. The cofactor is [4Fe-4S] cluster. As to expression, widely expressed.

It is found in the nucleus. Its subcellular location is the cytoplasm. The protein resides in the cytoskeleton. The protein localises to the microtubule organizing center. It localises to the centrosome. It is found in the cilium axoneme. Its subcellular location is the centriole. Its function is as follows. Component of the cytosolic iron-sulfur (Fe/S) protein assembly (CIA) machinery. Required for maturation of extramitochondrial Fe-S proteins. The NUBP1-NUBP2 heterotetramer forms a Fe-S scaffold complex, mediating the de novo assembly of an Fe-S cluster and its transfer to target apoproteins. Negatively regulates cilium formation and structure. The chain is Cytosolic Fe-S cluster assembly factor NUBP2 (Nubp2) from Mus musculus (Mouse).